The following is a 118-amino-acid chain: Altered inheritance of mitochondria protein 26, mitochondrial (118 aa).

The next 3 helical transmembrane spans lie at 7–27 (EHLLLSQLKGSFFLLLLAYFF), 41–61 (LAVTPGAITIAIAIATDSIPA), and 98–118 (FLFCLGSARFCISFPCFGLSI).

The protein localises to the mitochondrion membrane. Functionally, involved in selective mitochondria autophagy (mitophagy). The chain is Altered inheritance of mitochondria protein 26, mitochondrial (AIM26) from Saccharomyces cerevisiae (strain ATCC 204508 / S288c) (Baker's yeast).